Here is a 338-residue protein sequence, read N- to C-terminus: Microtubule-associated protein RP/EB family member 2 (338 aa).

The interval 1-21 is disordered; sequence MPGPTQALSPNGENNNDIIQD. Residues 57–159 form the Calponin-homology (CH) domain; that stretch reads TMSRHDIIAW…FIQWFKKFFD (103 aa). 2 disordered regions span residues 171–241 and 300–338; these read EARQ…KDLE and SEEH…FHFV. Low complexity predominate over residues 200–234; the sequence is SPTAGAAKSSPASKPGSTPSRPSSAKKAAPSSSAS. Residues 236 to 306 form the EB1 C-terminal domain; that stretch reads SDKDLETQVI…LYASEEHESH (71 aa). Positions 300 to 327 are enriched in basic and acidic residues; the sequence is SEEHESHTEEHEGEEQVHEQPSSRRSTD. Over residues 328–338 the composition is skewed to low complexity; that stretch reads SRSVSDNFHFV.

The protein belongs to the MAPRE family.

Its subcellular location is the cytoplasm. The protein resides in the cytoskeleton. Functionally, may be involved in microtubule polymerization, and spindle function by stabilizing microtubules and anchoring them at centrosomes. This is Microtubule-associated protein RP/EB family member 2 (MAPRE2) from Gallus gallus (Chicken).